Consider the following 726-residue polypeptide: MELTNLIEKCTKHSKDFATEVEKLWNDELSSESGLSRKTRNVIRNILRDITKSLTTDKKSKCFCILERSTINGEQIKDVYKTIFNNGVDVESRINTTGKYVLFTVMTYAAAELRLIKSDEIFALLSRFFNMICDIHRKYGCGNMFVGIPAALIVLLEIDHINKLFSVFSTRYDAKAYLYTEYFLFLNINHYLLSGSDLFINVAYGAVSFSSPISVPDYIMEALTFKACDHIMKSGDLIYIYAFTKKVKDLFNTKSDSIYQYVRLHEMSYDGVSEDTDDDDEVFAILNLSIDSSVDRYRNRVLLLTPEVASLRKEYSEAEPDYKYLMDEEVSAYDKHLPKPITNTGIEEPHATGGDKEDQPIKVVYPPNNDKDDAIKPHNPLEDPNYVPTITRTDIGIADYQLVINKLIEWLDKCEEECGNGGEFKTELEEAKRKLTELNAELSDKLSKIMSLERDSVNKTERIDRLTKEIKELRDIQNGTDDGSDSSEIDKKIIRELRESLDREREMRSKLEKELDTIRDGKVDGSCQRELELRRMWLKQRDDDLRAEIDKRRNVEWELSRLRRDIKECDKYKEDLDKAKATISNYVSRISTLESEIAKYQQDRDTLSVVRRELEEERRRVKDLESRLDECTRNQEDTQEVDALRSRIRELENKLTDCIESGGGNLTEISRLQSRISDLERQLNECRGNVTEISRLESRISDLERQLNDCRRNNETNAETERDATS.

The segment at Thr-342–Ile-361 is disordered. The span at Glu-347–Pro-360 shows a compositional bias: basic and acidic residues. The tract at residues Thr-426–Asn-713 is 4 X approximate tandem repeats. Repeat copies occupy residues Arg-612–Asn-634, Gln-639–Ser-661, Thr-667–Asn-689, and Thr-691–Asn-713.

This sequence belongs to the poxviridae A25 protein family. Interacts (via N-terminus) with protein A26.

Its subcellular location is the virion. In terms of biological role, structural protein that forms a matrix surrounding the mature virion (MV) through interaction with protein A26. Presence of protein A25 in the virion structurally prevents direct virus-cell fusion mechanism. In Camelus, this protein is A-type inclusion protein A25 homolog.